The chain runs to 95 residues: Protein TusB (95 aa).

It belongs to the DsrH/TusB family. In terms of assembly, heterohexamer, formed by a dimer of trimers. The hexameric TusBCD complex contains 2 copies each of TusB, TusC and TusD. The TusBCD complex interacts with TusE.

It localises to the cytoplasm. Its function is as follows. Part of a sulfur-relay system required for 2-thiolation of 5-methylaminomethyl-2-thiouridine (mnm(5)s(2)U) at tRNA wobble positions. The polypeptide is Protein TusB (Escherichia fergusonii (strain ATCC 35469 / DSM 13698 / CCUG 18766 / IAM 14443 / JCM 21226 / LMG 7866 / NBRC 102419 / NCTC 12128 / CDC 0568-73)).